The sequence spans 128 residues: Large ribosomal subunit protein bL12 (128 aa).

It belongs to the bacterial ribosomal protein bL12 family. As to quaternary structure, homodimer. Part of the ribosomal stalk of the 50S ribosomal subunit. Forms a multimeric L10(L12)X complex, where L10 forms an elongated spine to which 2 to 4 L12 dimers bind in a sequential fashion. Binds GTP-bound translation factors.

Its function is as follows. Forms part of the ribosomal stalk which helps the ribosome interact with GTP-bound translation factors. Is thus essential for accurate translation. The sequence is that of Large ribosomal subunit protein bL12 from Synechococcus sp. (strain CC9902).